The following is a 468-amino-acid chain: ATP synthase subunit beta (468 aa).

155–162 (GGAGVGKT) provides a ligand contact to ATP.

Belongs to the ATPase alpha/beta chains family. In terms of assembly, F-type ATPases have 2 components, CF(1) - the catalytic core - and CF(0) - the membrane proton channel. CF(1) has five subunits: alpha(3), beta(3), gamma(1), delta(1), epsilon(1). CF(0) has three main subunits: a(1), b(2) and c(9-12). The alpha and beta chains form an alternating ring which encloses part of the gamma chain. CF(1) is attached to CF(0) by a central stalk formed by the gamma and epsilon chains, while a peripheral stalk is formed by the delta and b chains.

It localises to the cell membrane. The enzyme catalyses ATP + H2O + 4 H(+)(in) = ADP + phosphate + 5 H(+)(out). In terms of biological role, produces ATP from ADP in the presence of a proton gradient across the membrane. The catalytic sites are hosted primarily by the beta subunits. The chain is ATP synthase subunit beta from Streptococcus sanguinis (strain SK36).